Reading from the N-terminus, the 674-residue chain is Endopolyphosphatase (674 aa).

Over 1–21 the chain is Cytoplasmic; the sequence is MVVVGKSEVRNVSMSRPKKKS. Propeptides (removed in mature form) lie at residues 1–83 and 385–674; these read MVVV…VIIK and EQST…YKDD. Residue lysine 6 forms a Glycyl lysine isopeptide (Lys-Gly) (interchain with G-Cter in ubiquitin) linkage. Residues 22-42 traverse the membrane as a helical; Signal-anchor for type II membrane protein segment; it reads LIAILSTCVLFFLVFIIGAKF. Over 43-674 the chain is Vacuolar; sequence QYVSVFSKFL…SFASSGYKDD (632 aa). N-linked (GlcNAc...) asparagine glycosylation occurs at asparagine 58. Residues 384–403 form a disordered region; sequence MEQSTRVQQGEDSNEEDEET. Asparagine 505 and asparagine 511 each carry an N-linked (GlcNAc...) asparagine glycan.

The protein belongs to the endopolyphosphatase PPN1 family. As to quaternary structure, homotetramer. Interacts with PPN2. Mn(2+) serves as cofactor. The cofactor is Mg(2+). Co(2+) is required as a cofactor. It depends on Zn(2+) as a cofactor. Processing by proteases in the vacuole is required for activation. In terms of processing, ubiquitinated. Ubiquitination mediates sorting into internal vesicles in late endosomes. TUL1 and RSP5 are required for ubiquitination. Other cytoplasmic Lys residues than Lys-6 may also be ubiquitinated. Post-translationally, N-glycosylated. N-glycosylation is essential for the protease-mediated maturation.

The protein resides in the vacuole membrane. The protein localises to the cytoplasm. The catalysed reaction is [phosphate](n+1) + n H2O = (n+1) phosphate + n H(+). It catalyses the reaction [phosphate](n) + H2O = [phosphate](n-1) + phosphate + H(+). The enzyme catalyses dATP + H2O = dADP + phosphate + H(+). Its activity is regulated as follows. Inhibited by heparin and EDTA. Functionally, catalyzes the hydrolysis of inorganic polyphosphate (polyP) chains of many hundreds of phosphate residues into shorter lengths. Has both exopolyphosphatase and endopolyphosphatase activities at different ratios depending on divalent cations by cleaving phosphate from the chain end and by fragmenting long-chain polymers into shorter ones, respectively. The limited digestion products are 1 and 3 P(i) residues. Also releases phosphate from dATP. dATP phosphohydrolase activity is about 7-fold lower than the exopolyphosphatase activity. In Saccharomyces cerevisiae (strain ATCC 204508 / S288c) (Baker's yeast), this protein is Endopolyphosphatase.